Here is a 299-residue protein sequence, read N- to C-terminus: Urease accessory protein UreD (299 aa).

This sequence belongs to the UreD family. UreD, UreF and UreG form a complex that acts as a GTP-hydrolysis-dependent molecular chaperone, activating the urease apoprotein by helping to assemble the nickel containing metallocenter of UreC. The UreE protein probably delivers the nickel.

It localises to the cytoplasm. In terms of biological role, required for maturation of urease via the functional incorporation of the urease nickel metallocenter. The polypeptide is Urease accessory protein UreD (Prochlorococcus marinus (strain MIT 9303)).